A 280-amino-acid chain; its full sequence is Pantothenate synthetase (280 aa).

31 to 38 is an ATP binding site; it reads MGNLHAGH. The Proton donor role is filled by His38. Gln62 lines the (R)-pantoate pocket. Gln62 contacts beta-alanine. ATP is bound at residue 150–153; sequence GKKD. Gln156 contacts (R)-pantoate. Residues Val179 and 187–190 contribute to the ATP site; that span reads MSSR.

This sequence belongs to the pantothenate synthetase family. Homodimer.

The protein localises to the cytoplasm. The enzyme catalyses (R)-pantoate + beta-alanine + ATP = (R)-pantothenate + AMP + diphosphate + H(+). It functions in the pathway cofactor biosynthesis; (R)-pantothenate biosynthesis; (R)-pantothenate from (R)-pantoate and beta-alanine: step 1/1. Catalyzes the condensation of pantoate with beta-alanine in an ATP-dependent reaction via a pantoyl-adenylate intermediate. The polypeptide is Pantothenate synthetase (Xanthomonas axonopodis pv. citri (strain 306)).